The primary structure comprises 509 residues: Transcription factor SOX-9 (509 aa).

Disordered regions lie at residues 1 to 67 and 160 to 273; these read MNLL…SEED and RLRV…FRDV. Over residues 30-41 the composition is skewed to low complexity; sequence SAGSPCPSGSGS. Polar residues predominate over residues 42-52; that stretch reads DTENTRPQENT. 2 stretches are compositionally biased toward basic and acidic residues: residues 56–67 and 160–174; these read GEPDLKKESEED and RLRV…DYKY. A dimerization (DIM) region spans residues 63–103; sequence ESEEDKFPVCIREAVSQVLKGYDWTLVPMPVRVNGSSKNKP. Positions 63-103 are PQA; sequence ESEEDKFPVCIREAVSQVLKGYDWTLVPMPVRVNGSSKNKP. A Phosphoserine modification is found at S64. Positions 105–173 form a DNA-binding region, HMG box; sequence VKRPMNAFMV…QHKKDHPDYK (69 aa). S211 bears the Phosphoserine mark. Residues 224 to 307 form a transactivation domain (TAM) region; it reads PGEHSGQSQG…LPPNGHPGVP (84 aa). 2 consecutive short sequence motifs (9aaTAD) follow at residues 275–284 and 290–298; these read IGELSSDVIS and DVNEFDQYL. Residues 330–415 are disordered; the sequence is SAGHVWMSKQ…HYSEQQQHSP (86 aa). Residues 341-376 are compositionally biased toward pro residues; the sequence is APPPPPQQPPQAPPAPQAPPQPQAAPPQQPAAPPQQ. Residues 380-415 are compositionally biased toward polar residues; that stretch reads HTLTTLSSEPGQSQRTHIKTEQLSPSHYSEQQQHSP. A transactivation domain (TAC) region spans residues 394 to 509; the sequence is RTHIKTEQLS…QPVYTQLTRP (116 aa). K398 participates in a covalent cross-link: Glycyl lysine isopeptide (Lys-Gly) (interchain with G-Cter in ubiquitin). The 9aaTAD 3 motif lies at 460–468; the sequence is TGLYSTFTY. The disordered stretch occupies residues 479 to 509; that stretch reads PIADTSGVPSIPQTHSPQHWEQPVYTQLTRP. The span at 485 to 509 shows a compositional bias: polar residues; that stretch reads GVPSIPQTHSPQHWEQPVYTQLTRP.

Homodimer; homodimerization is required for activity. Interacts (via C-terminus) with ZNF219; forming a complex that binds to the COL2A1 promoter and activates COL2A1 expression. Interacts with DDRGK1. Interacts with EP300/p300. Interacts with beta-catenin (CTNNB1); inhibiting CTNNB1 activity by competing with the binding sites of TCF/LEF within CTNNB1. Post-translationally, acetylated; acetylation impairs nuclear localization and ability to transactivate expression of target genes. Deacetylated by SIRT1. In terms of processing, phosphorylation at Ser-64 and Ser-211 by PKA increases transcriptional activity and may help delay chondrocyte maturation downstream of PTHLH/PTHrP signaling. Phosphorylation at either Ser-64 or Ser-211 is required for sumoylation, but phosphorylation is not dependent on sumoylation. Phosphorylated on tyrosine residues; tyrosine dephosphorylation by PTPN11/SHP2 blocks SOX9 phosphorylation by PKA and subsequent SUMOylation. Ubiquitinated; ubiquitination leads to proteasomal degradation and is negatively regulated by DDRGK1. Post-translationally, sumoylated; phosphorylation at either Ser-64 or Ser-211 is required for sumoylation. Sumoylation is induced by BMP signaling pathway.

It localises to the nucleus. Transcription factor that plays a key role in chondrocytes differentiation and skeletal development. Specifically binds the 5'-ACAAAG-3' DNA motif present in enhancers and super-enhancers and promotes expression of genes important for chondrogenesis, including cartilage matrix protein-coding genes COL2A1, COL4A2, COL9A1, COL11A2 and ACAN, SOX5 and SOX6. Also binds to some promoter regions. Plays a central role in successive steps of chondrocyte differentiation. Absolutely required for precartilaginous condensation, the first step in chondrogenesis during which skeletal progenitors differentiate into prechondrocytes. Together with SOX5 and SOX6, required for overt chondrogenesis when condensed prechondrocytes differentiate into early stage chondrocytes, the second step in chondrogenesis. Later, required to direct hypertrophic maturation and block osteoblast differentiation of growth plate chondrocytes: maintains chondrocyte columnar proliferation, delays prehypertrophy and then prevents osteoblastic differentiation of chondrocytes by lowering beta-catenin (CTNNB1) signaling and RUNX2 expression. Also required for chondrocyte hypertrophy, both indirectly, by keeping the lineage fate of chondrocytes, and directly, by remaining present in upper hypertrophic cells and transactivating COL10A1 along with MEF2C. Low lipid levels are the main nutritional determinant for chondrogenic commitment of skeletal progenitor cells: when lipids levels are low, FOXO (FOXO1 and FOXO3) transcription factors promote expression of SOX9, which induces chondrogenic commitment and suppresses fatty acid oxidation. Mechanistically, helps, but is not required, to remove epigenetic signatures of transcriptional repression and deposit active promoter and enhancer marks at chondrocyte-specific genes. Acts in cooperation with the Hedgehog pathway-dependent GLI (GLI1 and GLI3) transcription factors. In addition to cartilage development, also acts as a regulator of proliferation and differentiation in epithelial stem/progenitor cells: involved in the lung epithelium during branching morphogenesis, by balancing proliferation and differentiation and regulating the extracellular matrix. Controls epithelial branching during kidney development. In Homo sapiens (Human), this protein is Transcription factor SOX-9.